Consider the following 326-residue polypeptide: Phenylalanine--tRNA ligase alpha subunit (326 aa).

A Mg(2+)-binding site is contributed by glutamate 251.

The protein belongs to the class-II aminoacyl-tRNA synthetase family. Phe-tRNA synthetase alpha subunit type 1 subfamily. Tetramer of two alpha and two beta subunits. Mg(2+) serves as cofactor.

It is found in the cytoplasm. The enzyme catalyses tRNA(Phe) + L-phenylalanine + ATP = L-phenylalanyl-tRNA(Phe) + AMP + diphosphate + H(+). In Alteromonas mediterranea (strain DSM 17117 / CIP 110805 / LMG 28347 / Deep ecotype), this protein is Phenylalanine--tRNA ligase alpha subunit.